Here is a 377-residue protein sequence, read N- to C-terminus: Compound eye opsin BCRH2 (377 aa).

The Extracellular portion of the chain corresponds to 1 to 53 (MTNATGPQMAYYGAASMDFGYPEGVSIVDFVRPEIKPYVHQHWYNYPPVNPMW). Asn3 carries an N-linked (GlcNAc...) asparagine glycan. A helical membrane pass occupies residues 54–78 (HYLLGVIYLFLGTVSIFGNGLVIYL). The Cytoplasmic portion of the chain corresponds to 79–90 (FNKSAALRTPAN). Residues 91–115 (ILVVNLALSDLIMLTTNVPFFTYNC) traverse the membrane as a helical segment. The Extracellular portion of the chain corresponds to 116-131 (FSGGVWMFSPQYCEIY). Cys128 and Cys205 form a disulfide bridge. A helical transmembrane segment spans residues 132–151 (ACLGAITGVCSIWLLCMISF). The Cytoplasmic segment spans residues 152–170 (DRYNIICNGFNGPKLTTGK). Residues 171-194 (AVVFALISWVIAIGCALPPFFGWG) form a helical membrane-spanning segment. The Extracellular portion of the chain corresponds to 195-218 (NYILEGILDSCSYDYLTQDFNTFS). The helical transmembrane segment at 219–246 (YNIFIFVFDYFLPAAIIVFSYVFIVKAI) threads the bilayer. Over 247–281 (FAHEAAMRAQAKKMNVSTLRSNEADAQRAEIRIAK) the chain is Cytoplasmic. The helical transmembrane segment at 282–305 (TALVNVSLWFICWTPYALISLKGV) threads the bilayer. The Extracellular segment spans residues 306-313 (MGDTSGIT). A helical membrane pass occupies residues 314 to 338 (PLVSTLPALLAKSCSCYNPFVYAIS). Lys325 is subject to N6-(retinylidene)lysine. The Cytoplasmic portion of the chain corresponds to 339–377 (HPKYRLAITQHLPWFCVHETETKSNDDSQSNSTVAQDKA).

Belongs to the G-protein coupled receptor 1 family. Opsin subfamily. Phosphorylated on some or all of the serine and threonine residues present in the C-terminal region. In terms of tissue distribution, expressed in all of the seven retinular cells (R1-R7) forming the main rhabdom in each ommatidium.

The protein resides in the membrane. In terms of biological role, visual pigments are the light-absorbing molecules that mediate vision. They consist of an apoprotein, opsin, covalently linked to cis-retinal. This opsin produces visual pigments with maximal absorption in the blue-green region of the spectrum. The protein is Compound eye opsin BCRH2 of Hemigrapsus sanguineus (Asian shore crab).